Consider the following 177-residue polypeptide: ECF RNA polymerase sigma factor SigL (177 aa).

A sigma-70 factor domain-2 region spans residues 18–85 (LYDEHAAVLW…MIIDERRSAR (68 aa)). The Interaction with polymerase core subunit RpoC signature appears at 42-45 (DVVQ). The tract at residues 119–167 (ALAQLSAEHRAVIQRSYYRGWSTAQIATDLGIAEGTVKSRLHYAVRALR) is sigma-70 factor domain-4. The H-T-H motif DNA-binding region spans 141-160 (TAQIATDLGIAEGTVKSRLH).

It belongs to the sigma-70 factor family. ECF subfamily. Interacts transiently with the RNA polymerase catalytic core formed by RpoA, RpoB, RpoC and RpoZ (2 alpha, 1 beta, 1 beta' and 1 omega subunit) to form the RNA polymerase holoenzyme that can initiate transcription. Interacts (via sigma-70 factor domain 4) with anti-sigma-L factor RslA.

Functionally, sigma factors are initiation factors that promote the attachment of RNA polymerase to specific initiation sites and are then released. Extracytoplasmic function (ECF) sigma factors are held in an inactive form by an anti-sigma factor until released by regulated intramembrane proteolysis. The sequence is that of ECF RNA polymerase sigma factor SigL (sigL) from Mycobacterium tuberculosis (strain ATCC 35801 / TMC 107 / Erdman).